A 157-amino-acid polypeptide reads, in one-letter code: ATP synthase subunit b (157 aa).

A helical membrane pass occupies residues 7 to 29 (LISQAIAFSLFILFTARFVWPYL).

Belongs to the ATPase B chain family. F-type ATPases have 2 components, F(1) - the catalytic core - and F(0) - the membrane proton channel. F(1) has five subunits: alpha(3), beta(3), gamma(1), delta(1), epsilon(1). F(0) has three main subunits: a(1), b(2) and c(10-14). The alpha and beta chains form an alternating ring which encloses part of the gamma chain. F(1) is attached to F(0) by a central stalk formed by the gamma and epsilon chains, while a peripheral stalk is formed by the delta and b chains.

It localises to the cell inner membrane. In terms of biological role, f(1)F(0) ATP synthase produces ATP from ADP in the presence of a proton or sodium gradient. F-type ATPases consist of two structural domains, F(1) containing the extramembraneous catalytic core and F(0) containing the membrane proton channel, linked together by a central stalk and a peripheral stalk. During catalysis, ATP synthesis in the catalytic domain of F(1) is coupled via a rotary mechanism of the central stalk subunits to proton translocation. Functionally, component of the F(0) channel, it forms part of the peripheral stalk, linking F(1) to F(0). The polypeptide is ATP synthase subunit b (Nitrosomonas europaea (strain ATCC 19718 / CIP 103999 / KCTC 2705 / NBRC 14298)).